The primary structure comprises 556 residues: Formate--tetrahydrofolate ligase (556 aa).

65-72 contributes to the ATP binding site; it reads TPAGEGKS.

It belongs to the formate--tetrahydrofolate ligase family.

It catalyses the reaction (6S)-5,6,7,8-tetrahydrofolate + formate + ATP = (6R)-10-formyltetrahydrofolate + ADP + phosphate. The protein operates within one-carbon metabolism; tetrahydrofolate interconversion. The polypeptide is Formate--tetrahydrofolate ligase (Streptococcus equi subsp. equi (strain 4047)).